A 263-amino-acid polypeptide reads, in one-letter code: Endonuclease 8 (263 aa).

Residue Pro2 is the Schiff-base intermediate with DNA of the active site. Catalysis depends on Glu3, which acts as the Proton donor. The Proton donor; for beta-elimination activity role is filled by Lys53. DNA-binding residues include Gln70, Arg125, and Asn169. The FPG-type zinc-finger motif lies at 229 to 263 (KVFHRDGESCERCGGIIERTMLSSRPFYWCPHCQR). Catalysis depends on Arg253, which acts as the Proton donor; for delta-elimination activity.

This sequence belongs to the FPG family. Zn(2+) is required as a cofactor.

The catalysed reaction is 2'-deoxyribonucleotide-(2'-deoxyribose 5'-phosphate)-2'-deoxyribonucleotide-DNA = a 3'-end 2'-deoxyribonucleotide-(2,3-dehydro-2,3-deoxyribose 5'-phosphate)-DNA + a 5'-end 5'-phospho-2'-deoxyribonucleoside-DNA + H(+). Its function is as follows. Involved in base excision repair of DNA damaged by oxidation or by mutagenic agents. Acts as a DNA glycosylase that recognizes and removes damaged bases. Has a preference for oxidized pyrimidines, such as thymine glycol, 5,6-dihydrouracil and 5,6-dihydrothymine. Has AP (apurinic/apyrimidinic) lyase activity and introduces nicks in the DNA strand. Cleaves the DNA backbone by beta-delta elimination to generate a single-strand break at the site of the removed base with both 3'- and 5'-phosphates. The sequence is that of Endonuclease 8 from Pectobacterium carotovorum subsp. carotovorum (strain PC1).